Consider the following 956-residue polypeptide: Translation initiation factor IF-2 (956 aa).

Positions Ser-33–Leu-370 are disordered. Positions Ile-46–Ala-60 are enriched in polar residues. Positions Ala-63–Ala-73 are enriched in basic and acidic residues. Low complexity predominate over residues Ala-76–Ser-100. Basic and acidic residues-rich tracts occupy residues Phe-112–Ala-125, Ser-134–Gln-143, and Asn-179–Arg-192. Residues Arg-199–Ala-213 are compositionally biased toward low complexity. Composition is skewed to basic and acidic residues over residues Ala-234–Ala-258 and Gln-266–Ser-276. Residues Ala-277–Lys-293 are compositionally biased toward low complexity. Over residues Asn-303 to Lys-320 the composition is skewed to basic and acidic residues. The span at Ser-325–Asn-343 shows a compositional bias: low complexity. A compositionally biased stretch (basic residues) spans Lys-344–Asn-354. Residues Glu-457–Lys-626 enclose the tr-type G domain. Residues Gly-466–Thr-473 are G1. Gly-466 to Thr-473 contacts GTP. Residues Gly-491 to His-495 are G2. Positions Asp-512–Gly-515 are G3. Residues Asp-512–His-516 and Asn-566–Asp-569 each bind GTP. The tract at residues Asn-566–Asp-569 is G4. The segment at Ser-602–Lys-604 is G5.

The protein belongs to the TRAFAC class translation factor GTPase superfamily. Classic translation factor GTPase family. IF-2 subfamily.

It localises to the cytoplasm. Its function is as follows. One of the essential components for the initiation of protein synthesis. Protects formylmethionyl-tRNA from spontaneous hydrolysis and promotes its binding to the 30S ribosomal subunits. Also involved in the hydrolysis of GTP during the formation of the 70S ribosomal complex. This Streptococcus equi subsp. equi (strain 4047) protein is Translation initiation factor IF-2.